A 141-amino-acid chain; its full sequence is Large ribosomal subunit protein uL11 (141 aa).

The protein belongs to the universal ribosomal protein uL11 family. Part of the ribosomal stalk of the 50S ribosomal subunit. Interacts with L10 and the large rRNA to form the base of the stalk. L10 forms an elongated spine to which L12 dimers bind in a sequential fashion forming a multimeric L10(L12)X complex. In terms of processing, one or more lysine residues are methylated.

Forms part of the ribosomal stalk which helps the ribosome interact with GTP-bound translation factors. The protein is Large ribosomal subunit protein uL11 of Agathobacter rectalis (strain ATCC 33656 / DSM 3377 / JCM 17463 / KCTC 5835 / VPI 0990) (Eubacterium rectale).